The sequence spans 985 residues: Disease resistance protein At4g27190 (985 aa).

Residues 24 to 88 adopt a coiled-coil conformation; it reads ANAIKFKSNV…ISKARLKLEE (65 aa). The NB-ARC domain occupies 167–429; it reads IGVWGMGGVG…MAEGFMEELG (263 aa). Residue 171-178 coordinates ATP; the sequence is GMGGVGKT. 6 LRR repeats span residues 502 to 523, 526 to 547, 551 to 572, 575 to 597, 598 to 620, and 621 to 643; these read SLRR…VEEF, KTSV…GFLQ, TLRI…SLLR, SLHS…ETLA, KLEL…EELK, and RFRH…VVSR.

The protein belongs to the disease resistance NB-LRR family.

Its function is as follows. Disease resistance protein. This Arabidopsis thaliana (Mouse-ear cress) protein is Disease resistance protein At4g27190.